The chain runs to 456 residues: tRNA modification GTPase MnmE (456 aa).

The (6S)-5-formyl-5,6,7,8-tetrahydrofolate site is built by arginine 24, glutamate 81, and lysine 120. In terms of domain architecture, TrmE-type G spans 216-379 (GMTVVIAGRP…LRDHLKACMG (164 aa)). Residue asparagine 226 coordinates K(+). GTP-binding positions include 226 to 231 (NAGKSS), 245 to 251 (TDIAGTT), 270 to 273 (DTAG), and 335 to 338 (NKAD). Serine 230 lines the Mg(2+) pocket. K(+)-binding residues include threonine 245, isoleucine 247, and threonine 250. Threonine 251 contacts Mg(2+). Lysine 456 contributes to the (6S)-5-formyl-5,6,7,8-tetrahydrofolate binding site.

This sequence belongs to the TRAFAC class TrmE-Era-EngA-EngB-Septin-like GTPase superfamily. TrmE GTPase family. Homodimer. Heterotetramer of two MnmE and two MnmG subunits. The cofactor is K(+).

The protein localises to the cytoplasm. Its function is as follows. Exhibits a very high intrinsic GTPase hydrolysis rate. Involved in the addition of a carboxymethylaminomethyl (cmnm) group at the wobble position (U34) of certain tRNAs, forming tRNA-cmnm(5)s(2)U34. The sequence is that of tRNA modification GTPase MnmE from Pseudomonas putida (strain GB-1).